A 538-amino-acid chain; its full sequence is Mitochondria-eating protein (538 aa).

Residues 1-273 (MAENLKRLVS…PRSRSCSRSR (273 aa)) form an interaction with YWHAG/14-3-3 protein gamma region. At Ser85 the chain carries Phosphoserine. Residues 97–137 (SKVPSLQDTFDRERHKDPSPRDRDMQQLDSNLNSTRSQCNQ) are disordered. Residues 105-122 (TFDRERHKDPSPRDRDMQ) are compositionally biased toward basic and acidic residues. 2 coiled-coil regions span residues 118–187 (DRDM…RHRN) and 219–256 (DQQD…RSSR). Positions 123-137 (QLDSNLNSTRSQCNQ) are enriched in polar residues. A phosphoserine mark is found at Ser156 and Ser159. Disordered regions lie at residues 173–226 (QLKS…TEAM) and 247–294 (KSAL…SKLS). Residues 181–210 (EDARHRNTDQRSSENRRSEPWSLEERKREQ) show a composition bias toward basic and acidic residues. Positions 211 to 224 (WNSLKQNADQQDTE) are enriched in polar residues. A compositionally biased stretch (low complexity) spans 253–278 (RSSRSRSPSPAPRSRSCSRSRSASPS). Residues Ser287 and Ser509 each carry the phosphoserine modification.

This sequence belongs to the MIEAP family. As to quaternary structure, interacts (via coiled-coil domains) with BNIP3L (via BH3 domain). Interacts (via coiled-coil domains) with BNIP3 (via BH3 domain). In terms of assembly, interacts with YWHAG/14-3-3 protein gamma; a protein that also plays a role in MALM.

It is found in the cytoplasm. The protein localises to the cytosol. Its subcellular location is the mitochondrion outer membrane. The protein resides in the mitochondrion matrix. Its function is as follows. Key regulator of mitochondrial quality that mediates the repairing or degradation of unhealthy mitochondria in response to mitochondrial damage. Mediator of mitochondrial protein catabolic process (also named MALM) by mediating the degradation of damaged proteins inside mitochondria by promoting the accumulation in the mitochondrial matrix of hydrolases that are characteristic of the lysosomal lumen. Also involved in mitochondrion degradation of damaged mitochondria by promoting the formation of vacuole-like structures (named MIV), which engulf and degrade unhealthy mitochondria by accumulating lysosomes. The physical interaction of SPATA18/MIEAP, BNIP3 and BNIP3L/NIX at the mitochondrial outer membrane regulates the opening of a pore in the mitochondrial double membrane in order to mediate the translocation of lysosomal proteins from the cytoplasm to the mitochondrial matrix. Binds cardiolipin. May form molecular condensates (non-membrane-bounded organelles) within mitochondria that compartmentalize and promote cardiolipin metabolism. The protein is Mitochondria-eating protein (SPATA18) of Homo sapiens (Human).